Here is a 527-residue protein sequence, read N- to C-terminus: ATP synthase subunit alpha (527 aa).

177–184 (GDRQTGKT) is an ATP binding site.

This sequence belongs to the ATPase alpha/beta chains family. F-type ATPases have 2 components, CF(1) - the catalytic core - and CF(0) - the membrane proton channel. CF(1) has five subunits: alpha(3), beta(3), gamma(1), delta(1), epsilon(1). CF(0) has four main subunits: a(1), b(1), b'(1) and c(9-12).

It is found in the cell membrane. The catalysed reaction is ATP + H2O + 4 H(+)(in) = ADP + phosphate + 5 H(+)(out). Its function is as follows. Produces ATP from ADP in the presence of a proton gradient across the membrane. The alpha chain is a regulatory subunit. This is ATP synthase subunit alpha from Roseiflexus sp. (strain RS-1).